Reading from the N-terminus, the 370-residue chain is MKLLLFILMISSIIIVPVGQAQRIKDLASVQGVRSNQLVGYGLVVGLPGTGEQSPFTEQSFRTMLSNFGISLDSSLKPKIKNVAAVAVHAELPPFLKPGQTIDVTVSSVGEAASLRGGTLLQTFLKGLDGKVYAVAQGSMVVSGFGAEGADGSKIVANTPTVGRIANGALIERAVPSGFMQNDFLTLNLNYPDFSTAKILADTINQRLGADPDKGYVIATPIDAASVRVSAPRDVGQRVGFLATLENFEFMPAKAPARIVINSRTGTIVIGQDVRLLPAAITHGGLTVTISENQQVTQPNPLGQGDTVVTDQSIIDVNLDDTRMFKFDPGVTLDQLVRAVNEVGAAPGDLMAILEALSEAGALQGELVVI.

The signal sequence occupies residues 1–21 (MKLLLFILMISSIIIVPVGQA).

It belongs to the FlgI family. As to quaternary structure, the basal body constitutes a major portion of the flagellar organelle and consists of four rings (L,P,S, and M) mounted on a central rod.

It localises to the periplasm. It is found in the bacterial flagellum basal body. Assembles around the rod to form the L-ring and probably protects the motor/basal body from shearing forces during rotation. The sequence is that of Flagellar P-ring protein from Pseudoalteromonas atlantica (strain T6c / ATCC BAA-1087).